Reading from the N-terminus, the 473-residue chain is Photosystem II CP43 reaction center protein (473 aa).

Residues 1 to 14 (MKILYSLRRYFHVE) constitute a propeptide that is removed on maturation. Thr15 is modified (N-acetylthreonine). A Phosphothreonine modification is found at Thr15. The next 5 membrane-spanning stretches (helical) occupy residues 69–93 (LFEV…PHLA), 134–155 (LIGP…KDKN), 178–200 (KAIW…RKIT), 255–275 (KPFA…LSYS), and 291–312 (WFNN…ASQA). Glu367 contributes to the [CaMn4O5] cluster binding site. A helical transmembrane segment spans residues 447 to 471 (RARAAAAGFEKGIDRDSEPVLYMEP).

Belongs to the PsbB/PsbC family. PsbC subfamily. As to quaternary structure, PSII is composed of 1 copy each of membrane proteins PsbA, PsbB, PsbC, PsbD, PsbE, PsbF, PsbH, PsbI, PsbJ, PsbK, PsbL, PsbM, PsbT, PsbX, PsbY, PsbZ, Psb30/Ycf12, at least 3 peripheral proteins of the oxygen-evolving complex and a large number of cofactors. It forms dimeric complexes. It depends on Binds multiple chlorophylls and provides some of the ligands for the Ca-4Mn-5O cluster of the oxygen-evolving complex. It may also provide a ligand for a Cl- that is required for oxygen evolution. PSII binds additional chlorophylls, carotenoids and specific lipids. as a cofactor.

Its subcellular location is the plastid. The protein resides in the chloroplast thylakoid membrane. Its function is as follows. One of the components of the core complex of photosystem II (PSII). It binds chlorophyll and helps catalyze the primary light-induced photochemical processes of PSII. PSII is a light-driven water:plastoquinone oxidoreductase, using light energy to abstract electrons from H(2)O, generating O(2) and a proton gradient subsequently used for ATP formation. The sequence is that of Photosystem II CP43 reaction center protein from Chara vulgaris (Common stonewort).